Consider the following 465-residue polypeptide: uncharacterized protein (465 aa).

Positions methionine 1 to glutamate 15 are enriched in basic and acidic residues. 2 disordered regions span residues methionine 1–serine 31 and glutamine 288–proline 320.

This is an uncharacterized protein from Dictyostelium discoideum (Social amoeba).